A 254-amino-acid chain; its full sequence is Proteasome subunit alpha (254 aa).

Residues 234 to 254 form a disordered region; sequence EEMLPTPAATEDAPANGDAPS.

This sequence belongs to the peptidase T1A family. In terms of assembly, the 20S proteasome core is composed of 14 alpha and 14 beta subunits that assemble into four stacked heptameric rings, resulting in a barrel-shaped structure. The two inner rings, each composed of seven catalytic beta subunits, are sandwiched by two outer rings, each composed of seven alpha subunits. The catalytic chamber with the active sites is on the inside of the barrel. Has a gated structure, the ends of the cylinder being occluded by the N-termini of the alpha-subunits. Is capped by the proteasome-associated ATPase, ARC.

It is found in the cytoplasm. It participates in protein degradation; proteasomal Pup-dependent pathway. Its activity is regulated as follows. The formation of the proteasomal ATPase ARC-20S proteasome complex, likely via the docking of the C-termini of ARC into the intersubunit pockets in the alpha-rings, may trigger opening of the gate for substrate entry. Interconversion between the open-gate and close-gate conformations leads to a dynamic regulation of the 20S proteasome proteolysis activity. In terms of biological role, component of the proteasome core, a large protease complex with broad specificity involved in protein degradation. In Rhodococcus erythropolis (strain PR4 / NBRC 100887), this protein is Proteasome subunit alpha.